We begin with the raw amino-acid sequence, 294 residues long: Probable enoyl-CoA hydratase echA12 (294 aa).

It belongs to the enoyl-CoA hydratase/isomerase family.

The enzyme catalyses a (3S)-3-hydroxyacyl-CoA = a (2E)-enoyl-CoA + H2O. The catalysed reaction is a 4-saturated-(3S)-3-hydroxyacyl-CoA = a (3E)-enoyl-CoA + H2O. Functionally, could possibly oxidize fatty acids using specific components. In Mycobacterium leprae (strain TN), this protein is Probable enoyl-CoA hydratase echA12 (echA12).